Here is a 525-residue protein sequence, read N- to C-terminus: Serine protease 1 (525 aa).

The N-terminal stretch at 1–32 (MKCKKPSALFSALALVGALGAASVLGAASANS) is a signal peptide. Residues 33–211 (ASPVAAATVQ…TVSDDVIVPV (179 aa)) constitute a propeptide that is removed on maturation. An intrachain disulfide couples C223 to C239. Active-site charge relay system residues include H238 and D270. 5 disulfide bridges follow: C310-C320, C346-C376, C412-C431, C453-C472, and C496-C514. S352 serves as the catalytic Charge relay system. The 130-residue stretch at 396-525 (TSTDVTTSYV…GGANQKWWRR (130 aa)) folds into the Ricin B-type lectin domain. The segment at 401-525 (TTSYVQGYQN…GGANQKWWRR (125 aa)) is essential for the lytic activity, but not for protease function.

It belongs to the peptidase S1 family.

Its subcellular location is the secreted. Its function is as follows. Major serine protease exhibiting lytic activity toward living yeast cells. Similar to elastase in its substrate specificity and has a lectin-like affinity for mannose. Mannoproteins may be the native substrate for RPI. This chain is Serine protease 1, found in Rarobacter faecitabidus.